A 308-amino-acid polypeptide reads, in one-letter code: Homoserine O-acetyltransferase (308 aa).

Cys142 (acyl-thioester intermediate) is an active-site residue. Lys163 and Ser192 together coordinate substrate. His235 serves as the catalytic Proton acceptor. Glu237 is a catalytic residue. Arg249 serves as a coordination point for substrate.

Belongs to the MetA family.

Its subcellular location is the cytoplasm. The catalysed reaction is L-homoserine + acetyl-CoA = O-acetyl-L-homoserine + CoA. It functions in the pathway amino-acid biosynthesis; L-methionine biosynthesis via de novo pathway; O-acetyl-L-homoserine from L-homoserine: step 1/1. Its function is as follows. Transfers an acetyl group from acetyl-CoA to L-homoserine, forming acetyl-L-homoserine. This is Homoserine O-acetyltransferase from Agrobacterium fabrum (strain C58 / ATCC 33970) (Agrobacterium tumefaciens (strain C58)).